A 411-amino-acid polypeptide reads, in one-letter code: Probable glutamate dehydrogenase 3 (411 aa).

Lys102 is a catalytic residue.

It belongs to the Glu/Leu/Phe/Val dehydrogenases family.

The enzyme catalyses L-glutamate + NAD(+) + H2O = 2-oxoglutarate + NH4(+) + NADH + H(+). It catalyses the reaction L-glutamate + NADP(+) + H2O = 2-oxoglutarate + NH4(+) + NADPH + H(+). The protein is Probable glutamate dehydrogenase 3 (GSH3) of Arabidopsis thaliana (Mouse-ear cress).